We begin with the raw amino-acid sequence, 158 residues long: MAIFEGSFTTASTLKVGIVIARFNDLITNKILSGCLDCLKRHGLDTSELSNQVDIVWVPGSFELPIAAKTLMKKKSYDVVIALGAVIRGETSHYDVVISEASKGISQVSNENNVPIIFGVLTTDTMQQALERAGIKNNLGWNYALQAIEMGSLIKNLN.

Residues F23, 61–63, and 85–87 contribute to the 5-amino-6-(D-ribitylamino)uracil site; these read SFE and AVI. 90–91 lines the (2S)-2-hydroxy-3-oxobutyl phosphate pocket; the sequence is ET. The Proton donor role is filled by H93. Residue F118 participates in 5-amino-6-(D-ribitylamino)uracil binding. R132 provides a ligand contact to (2S)-2-hydroxy-3-oxobutyl phosphate.

This sequence belongs to the DMRL synthase family.

It catalyses the reaction (2S)-2-hydroxy-3-oxobutyl phosphate + 5-amino-6-(D-ribitylamino)uracil = 6,7-dimethyl-8-(1-D-ribityl)lumazine + phosphate + 2 H2O + H(+). It functions in the pathway cofactor biosynthesis; riboflavin biosynthesis; riboflavin from 2-hydroxy-3-oxobutyl phosphate and 5-amino-6-(D-ribitylamino)uracil: step 1/2. In terms of biological role, catalyzes the formation of 6,7-dimethyl-8-ribityllumazine by condensation of 5-amino-6-(D-ribitylamino)uracil with 3,4-dihydroxy-2-butanone 4-phosphate. This is the penultimate step in the biosynthesis of riboflavin. The protein is 6,7-dimethyl-8-ribityllumazine synthase of Prochlorococcus marinus (strain AS9601).